A 325-amino-acid chain; its full sequence is DNA-directed RNA polymerase subunit alpha (325 aa).

Residues 1–231 are alpha N-terminal domain (alpha-NTD); that stretch reads MQTSLLKPKI…DQLSVFAALE (231 aa). The segment at 246 to 325 is alpha C-terminal domain (alpha-CTD); that stretch reads IDPILLRPVD…ENWPPAGLDK (80 aa).

Belongs to the RNA polymerase alpha chain family. Homodimer. The RNAP catalytic core consists of 2 alpha, 1 beta, 1 beta' and 1 omega subunit. When a sigma factor is associated with the core the holoenzyme is formed, which can initiate transcription.

The enzyme catalyses RNA(n) + a ribonucleoside 5'-triphosphate = RNA(n+1) + diphosphate. DNA-dependent RNA polymerase catalyzes the transcription of DNA into RNA using the four ribonucleoside triphosphates as substrates. The chain is DNA-directed RNA polymerase subunit alpha from Burkholderia thailandensis (strain ATCC 700388 / DSM 13276 / CCUG 48851 / CIP 106301 / E264).